The following is a 418-amino-acid chain: MTDVEQPVSVEDQQAQAQSYYDQVLGNAYVQTAINAYTKTKEFHPLLNSTLNSAEEKVSTVGNYAAQKAYDGYNSYYVKPKNTAYEAVSYGTERAKTAVESGKQAAIVGGTFGIGAAVVLTQFSLALSAGGAALVLEQVDSAKKLGSSAISTIKEAELAVEHRIFSALHQAQRIAMVPVEKITENTNSLLDILDGAVQKGLNIEVPPSVNLTIGQRVKNLASLIVQGVSNKLFKAHDHVIDPINERARNYLEQLSQSFVLLDIVREKKTWVIEKSNELSTSVFDFKKTLEEEAQKYKVAPEEMLMKHIQSTSEQLSTQLQSLREKGQNVFGDGTKIDSTIDYLENLKKNFTDAEDVYKVRDEVLNEGRQRIAELSTWTTSLLIISAEWQFEPEDLLIEELYFDAPPPVRTRNLYRNRA.

Residues 211–275 form a required for lipid droplet localization region; the sequence is LTIGQRVKNL…EKKTWVIEKS (65 aa).

This sequence belongs to the perilipin family. As to expression, expressed in intestinal and epidermal cells. Expressed in the muscle and hypodermis.

It is found in the lipid droplet. Functionally, lipid droplet-associated protein which plays a role in lipid droplet clustering. This chain is Perilipin-1 homolog, found in Caenorhabditis elegans.